The sequence spans 210 residues: MANEERTIPETNVASERPEDPVESQTRAEGGEQIQEAAPETAELEAVQQLLEDARSKADEHWNELLRARAELENQRRRHERELEKGRKYALEKFAQDLLPVKDSLEMGLAAAQAEDANVTALREGTELILKMFNEVAARFGIETIDPQGEAFNPDFHQAISTQESSEAAPDTVLTVVRKGYALNGRLLRPAMVVVSKPGEQTTAGVDTQA.

The segment at 1-42 (MANEERTIPETNVASERPEDPVESQTRAEGGEQIQEAAPETA) is disordered.

The protein belongs to the GrpE family. As to quaternary structure, homodimer.

The protein resides in the cytoplasm. Functionally, participates actively in the response to hyperosmotic and heat shock by preventing the aggregation of stress-denatured proteins, in association with DnaK and GrpE. It is the nucleotide exchange factor for DnaK and may function as a thermosensor. Unfolded proteins bind initially to DnaJ; upon interaction with the DnaJ-bound protein, DnaK hydrolyzes its bound ATP, resulting in the formation of a stable complex. GrpE releases ADP from DnaK; ATP binding to DnaK triggers the release of the substrate protein, thus completing the reaction cycle. Several rounds of ATP-dependent interactions between DnaJ, DnaK and GrpE are required for fully efficient folding. This Nitrosococcus oceani (strain ATCC 19707 / BCRC 17464 / JCM 30415 / NCIMB 11848 / C-107) protein is Protein GrpE.